A 58-amino-acid polypeptide reads, in one-letter code: Photosystem II reaction center protein K (58 aa).

The propeptide occupies 1-21; the sequence is MLVISNVYPSNLFTLINPFFA. A helical membrane pass occupies residues 29–49; the sequence is IFDPIVDVMPIIPVFFFLLAF.

Belongs to the PsbK family. PSII is composed of 1 copy each of membrane proteins PsbA, PsbB, PsbC, PsbD, PsbE, PsbF, PsbH, PsbI, PsbJ, PsbK, PsbL, PsbM, PsbT, PsbX, PsbY, PsbZ, Psb30/Ycf12, at least 3 peripheral proteins of the oxygen-evolving complex and a large number of cofactors. It forms dimeric complexes.

It localises to the plastid. Its subcellular location is the chloroplast thylakoid membrane. Its function is as follows. One of the components of the core complex of photosystem II (PSII). PSII is a light-driven water:plastoquinone oxidoreductase that uses light energy to abstract electrons from H(2)O, generating O(2) and a proton gradient subsequently used for ATP formation. It consists of a core antenna complex that captures photons, and an electron transfer chain that converts photonic excitation into a charge separation. This Psilotum nudum (Whisk fern) protein is Photosystem II reaction center protein K.